Consider the following 429-residue polypeptide: Ribosomal RNA small subunit methyltransferase B (429 aa).

Residues 254–260 (CAAPGGK), D277, D303, and D322 contribute to the S-adenosyl-L-methionine site. C375 serves as the catalytic Nucleophile. The segment at 397–419 (ALSETGTPDQPGQQNLPGGEEGD) is disordered. Residues 400-412 (ETGTPDQPGQQNL) are compositionally biased toward polar residues.

This sequence belongs to the class I-like SAM-binding methyltransferase superfamily. RsmB/NOP family.

Its subcellular location is the cytoplasm. The catalysed reaction is cytidine(967) in 16S rRNA + S-adenosyl-L-methionine = 5-methylcytidine(967) in 16S rRNA + S-adenosyl-L-homocysteine + H(+). In terms of biological role, specifically methylates the cytosine at position 967 (m5C967) of 16S rRNA. This is Ribosomal RNA small subunit methyltransferase B from Salmonella typhi.